Here is a 231-residue protein sequence, read N- to C-terminus: 3-oxoadipate CoA-transferase subunit A (231 aa).

A CoA-binding site is contributed by 25 to 31; it reads GGFGTAG.

Belongs to the 3-oxoacid CoA-transferase subunit A family. Heterodimer.

The enzyme catalyses 3-oxoadipate + succinyl-CoA = 3-oxoadipyl-CoA + succinate. The protein operates within aromatic compound metabolism; beta-ketoadipate pathway; acetyl-CoA and succinyl-CoA from 3-oxoadipate: step 1/2. The sequence is that of 3-oxoadipate CoA-transferase subunit A (pcaI) from Pseudomonas putida (Arthrobacter siderocapsulatus).